The sequence spans 192 residues: uncharacterized protein (192 aa).

Positions glutamine 29–serine 160 constitute a Nudix hydrolase domain. Positions glycine 67–alanine 89 match the Nudix box motif. Mg(2+) is bound by residues glutamate 83 and glutamate 87.

This sequence belongs to the Nudix hydrolase family. PCD1 subfamily. Mn(2+) is required as a cofactor. It depends on Mg(2+) as a cofactor.

Functionally, probably mediates the hydrolysis of some nucleoside diphosphate derivatives. This is an uncharacterized protein from Salmonella newport (strain SL254).